The chain runs to 377 residues: Nitric oxide reductase FlRd-NAD(+) reductase (377 aa).

This sequence belongs to the FAD-dependent oxidoreductase family. FAD is required as a cofactor.

The protein localises to the cytoplasm. It carries out the reaction 2 reduced [nitric oxide reductase rubredoxin domain] + NAD(+) + H(+) = 2 oxidized [nitric oxide reductase rubredoxin domain] + NADH. The protein operates within nitrogen metabolism; nitric oxide reduction. In terms of biological role, one of at least two accessory proteins for anaerobic nitric oxide (NO) reductase. Reduces the rubredoxin moiety of NO reductase. The chain is Nitric oxide reductase FlRd-NAD(+) reductase from Escherichia fergusonii (strain ATCC 35469 / DSM 13698 / CCUG 18766 / IAM 14443 / JCM 21226 / LMG 7866 / NBRC 102419 / NCTC 12128 / CDC 0568-73).